A 117-amino-acid chain; its full sequence is Minor capsid protein p17 (117 aa).

The N-linked (GlcNAc...) asparagine; by host glycan is linked to N12. The helical transmembrane segment at 39–59 (AILLGILILLVIILIIVAIVY) threads the bilayer. The segment at 96–117 (KNSTSQQSHIPSDEQLAELAHS) is disordered. N97 carries an N-linked (GlcNAc...) asparagine; by host glycan.

It belongs to the asfivirus minor capsid protein p17 family. As to quaternary structure, interacts with the minor capsid protein M1249L and with the hexon capsid protein p72 capsomers; these interactions form a rigid zipper structure that stabilizes the capsomers. Interacts with host STING1.

Its subcellular location is the virion membrane. The protein resides in the host endoplasmic reticulum membrane. In terms of biological role, together with the penton and the other minor capsid proteins (M1249L, p49), forms a complicated network immediately below the outer capsid shell, stabilizing the whole capsid. Three copies of p17 encircle each p72 capsomer in the inner capsid shell, anchoring p72 capsomers on the inner membrane. Required for the assembly of the capsid and icosahedral morphogenesis. Additionally, inhibits the host cGAS-STING pathway through its interaction with STING1 and subsequent interference of the recruitment of downstream components TBK1 and IKBKE. This is Minor capsid protein p17 from African swine fever virus (isolate Tick/South Africa/Pretoriuskop Pr4/1996) (ASFV).